Consider the following 815-residue polypeptide: Ferripyoverdine receptor (815 aa).

The signal sequence occupies residues 1-43 (MPAPHGLSPLSKAFLMRRAFQRRILPHSLAMALSLPLAGYVQA). Residues 161 to 271 (TPRETPQSIT…LGATINLIRK (111 aa)) form the TBDR plug domain. Positions 276–815 (EFKGHVELGA…NLMFSTRWDF (540 aa)) constitute a TBDR beta-barrel domain. The short motif at 798–815 (SASYGDPRNLMFSTRWDF) is the TonB C-terminal box element.

This sequence belongs to the TonB-dependent receptor family.

It is found in the cell outer membrane. Receptor for the siderophore ferripyoverdine. The polypeptide is Ferripyoverdine receptor (fpvA) (Pseudomonas aeruginosa (strain ATCC 15692 / DSM 22644 / CIP 104116 / JCM 14847 / LMG 12228 / 1C / PRS 101 / PAO1)).